The sequence spans 504 residues: Fumitremorgin C monooxygenase (504 aa).

The chain crosses the membrane as a helical span at residues 9-29 (LPYPGVVGASLLVILGIILLF). Position 442 (Cys-442) interacts with heme.

Belongs to the cytochrome P450 family. The cofactor is heme.

It is found in the membrane. The catalysed reaction is fumitremorgin C + 2 reduced [NADPH--hemoprotein reductase] + 2 O2 = 12alpha,13alpha-dihydroxyfumitremorgin C + 2 oxidized [NADPH--hemoprotein reductase] + 2 H2O + 2 H(+). It functions in the pathway mycotoxin biosynthesis. Cytochrome P450 monooxygenase; part of the gene cluster that mediates the biosynthesis of fumitremorgins, indole alkaloids that carry not only intriguing chemical structures, but also interesting biological and pharmacological activities. The biosynthesis of fumitremorgin-type alkaloids begins by condensation of the two amino acids L-tryptophan and L-proline to brevianamide F, catalyzed by the non-ribosomal peptide synthetase ftmPS/ftmA. Brevianamide F is then prenylated by the prenyltransferase ftmPT1/ftmB in the presence of dimethylallyl diphosphate, resulting in the formation of tryprostatin B. The three cytochrome P450 monooxygenases, ftmP450-1/ftmC, ftmP450-2/ftmE and ftmP450-3/FtmG, are responsible for the conversion of tryprostatin B to 6-hydroxytryprostatin B, tryprostatin A to fumitremorgin C and fumitremorgin C to 12,13-dihydroxyfumitremorgin C, respectively. The putative methyltransferase ftmMT/ftmD is expected for the conversion of 6-hydroxytryprostatin B to tryprostatin A. FtmPT2/FtmH catalyzes the prenylation of 12,13-dihydroxyfumitre-morgin C in the presence of dimethylallyl diphosphate, resulting in the formation of fumitremorgin B. Fumitremorgin B is further converted to verruculogen by ftmOx1/ftmF via the insertion of an endoperoxide bond between the two prenyl moieties. Finally, verruculogen is further converted to fumitremorgin A by the verruculogen prenyltransferase ftmPT3. This Neosartorya fischeri (strain ATCC 1020 / DSM 3700 / CBS 544.65 / FGSC A1164 / JCM 1740 / NRRL 181 / WB 181) (Aspergillus fischerianus) protein is Fumitremorgin C monooxygenase.